Consider the following 216-residue polypeptide: Protein Syd (216 aa).

It belongs to the Syd family.

It localises to the cell inner membrane. Its function is as follows. Interacts with the SecY protein in vivo. May bind preferentially to an uncomplexed state of SecY, thus functioning either as a chelating agent for excess SecY in the cell or as a regulatory factor that negatively controls the translocase function. The sequence is that of Protein Syd from Shewanella baltica (strain OS155 / ATCC BAA-1091).